Reading from the N-terminus, the 364-residue chain is MITAEKKKKNKFLPNFEKQSIYSLRYDEMQQWLIDHGQQKFRAKQIFEWLYQKRVNTIDEMTNLSKELRQILKDHFAMTTLTTVVKQESKDGTIKFLFELQDGYTIETVLMRHEYGNSVCVTTQVGCRIGCTFCASTLGGLKRNLEAGEIVSQVLTVQKALDETNERVSQIVIMGIGEPFENYDEMMDFLRIVNDDNSLNIGARHITVSTSGIIPRIYDFAEEDIQINFAVSLHGAKDEIRSRLMPINRAYNVDKLMEAIRYYQEKTNRRVTFEYGLFGGVNDQLEHARDLAHLIKDLNCHVNLIPVNHVPERNYVKTPKDDIFKFEKELKRLGINATIRREQGSDIDAACGQLRAKERQVETR.

E107 functions as the Proton acceptor in the catalytic mechanism. A Radical SAM core domain is found at 113–346 (HEYGNSVCVT…ATIRREQGSD (234 aa)). A disulfide bond links C120 and C351. [4Fe-4S] cluster contacts are provided by C127, C131, and C134. S-adenosyl-L-methionine is bound by residues 177 to 178 (GE), S209, 232 to 234 (SLH), and N308. C351 (S-methylcysteine intermediate) is an active-site residue.

The protein belongs to the radical SAM superfamily. RlmN family. Requires [4Fe-4S] cluster as cofactor.

Its subcellular location is the cytoplasm. It catalyses the reaction adenosine(2503) in 23S rRNA + 2 reduced [2Fe-2S]-[ferredoxin] + 2 S-adenosyl-L-methionine = 2-methyladenosine(2503) in 23S rRNA + 5'-deoxyadenosine + L-methionine + 2 oxidized [2Fe-2S]-[ferredoxin] + S-adenosyl-L-homocysteine. It carries out the reaction adenosine(37) in tRNA + 2 reduced [2Fe-2S]-[ferredoxin] + 2 S-adenosyl-L-methionine = 2-methyladenosine(37) in tRNA + 5'-deoxyadenosine + L-methionine + 2 oxidized [2Fe-2S]-[ferredoxin] + S-adenosyl-L-homocysteine. Functionally, specifically methylates position 2 of adenine 2503 in 23S rRNA and position 2 of adenine 37 in tRNAs. Confers resistance to some classes of antibiotics. The sequence is that of Probable dual-specificity RNA methyltransferase RlmN from Staphylococcus epidermidis (strain ATCC 35984 / DSM 28319 / BCRC 17069 / CCUG 31568 / BM 3577 / RP62A).